Reading from the N-terminus, the 525-residue chain is FNIP repeat-containing protein DDB_G0274617 (525 aa).

One copy of the FNIP repeat lies at Tyr65–Tyr107.

This Dictyostelium discoideum (Social amoeba) protein is FNIP repeat-containing protein DDB_G0274617.